Reading from the N-terminus, the 101-residue chain is MSVSSAVDQYTVLTGDRSKIKDLLCSRLTECGWRDEVRLMCRNILNEKGTNNSFTVEQLIAEVTPKARTLVPDAVKKELLMKIRNILTEIEEEADEPEDES.

Belongs to the ENY2 family. In terms of assembly, component of the nuclear pore complex (NPC)-associated AMEX complex (anchoring and mRNA export complex), composed of at least e(y)2 and xmas-2. Component of the SAGA transcription coactivator-HAT complexes, at least composed of Ada2b, e(y)2, Pcaf/Gcn5, Taf10 and Nipped-A/Trrap. Within the SAGA complex, e(y)2, Sgf11, and not/nonstop form an additional subcomplex of SAGA called the DUB module (deubiquitination module). Component of the THO complex, composed of at least e(y)2, HPR1, THO2, THOC5, THOC6 and THOC7. Interacts with e(y)1. Interacts with su(Hw) (via zinc fingers). Interacts with xmas-2; required for localization to the nuclear periphery. Interacts with the nuclear pore complex (NPC).

Its subcellular location is the nucleus. It localises to the nucleoplasm. The protein localises to the cytoplasm. Functionally, involved in mRNA export coupled transcription activation by association with both the AMEX and the SAGA complexes. The SAGA complex is a multiprotein complex that activates transcription by remodeling chromatin and mediating histone acetylation and deubiquitination. Within the SAGA complex, participates in a subcomplex that specifically deubiquitinates histone H2B. The SAGA complex is recruited to specific gene promoters by activators, where it is required for transcription. Required for nuclear receptor-mediated transactivation. Involved in transcription elongation by recruiting the THO complex onto nascent mRNA. The AMEX complex functions in docking export-competent ribonucleoprotein particles (mRNPs) to the nuclear entrance of the nuclear pore complex (nuclear basket). AMEX participates in mRNA export and accurate chromatin positioning in the nucleus by tethering genes to the nuclear periphery. The chain is Enhancer of yellow 2 transcription factor from Drosophila simulans (Fruit fly).